The following is a 289-amino-acid chain: Epoxyqueuosine reductase (289 aa).

The Proton donor role is filled by D111. Residues 156-185 (QGDRPHSQHCGTCTRCLEACPTQAIVEPFV) enclose the 4Fe-4S ferredoxin-type domain. C165, C168, C171, C175, C191, C219, C222, and C226 together coordinate [4Fe-4S] cluster.

Belongs to the QueG family. Monomer. Cob(II)alamin is required as a cofactor. It depends on [4Fe-4S] cluster as a cofactor.

Its subcellular location is the cytoplasm. The enzyme catalyses epoxyqueuosine(34) in tRNA + AH2 = queuosine(34) in tRNA + A + H2O. It participates in tRNA modification; tRNA-queuosine biosynthesis. Catalyzes the conversion of epoxyqueuosine (oQ) to queuosine (Q), which is a hypermodified base found in the wobble positions of tRNA(Asp), tRNA(Asn), tRNA(His) and tRNA(Tyr). The chain is Epoxyqueuosine reductase from Synechocystis sp. (strain ATCC 27184 / PCC 6803 / Kazusa).